The following is a 428-amino-acid chain: Glutamate-1-semialdehyde 2,1-aminomutase 1 (428 aa).

Lys-268 is modified (N6-(pyridoxal phosphate)lysine).

This sequence belongs to the class-III pyridoxal-phosphate-dependent aminotransferase family. HemL subfamily. Homodimer. Pyridoxal 5'-phosphate serves as cofactor.

It is found in the cytoplasm. It catalyses the reaction (S)-4-amino-5-oxopentanoate = 5-aminolevulinate. Its pathway is porphyrin-containing compound metabolism; protoporphyrin-IX biosynthesis; 5-aminolevulinate from L-glutamyl-tRNA(Glu): step 2/2. The sequence is that of Glutamate-1-semialdehyde 2,1-aminomutase 1 from Geobacillus thermodenitrificans (strain NG80-2).